A 120-amino-acid chain; its full sequence is Kidney androgen-regulated protein (120 aa).

The first 18 residues, 1-18 (MMICKVLVITVFCVLTVA), serve as a signal peptide directing secretion.

It localises to the secreted. This Rattus norvegicus (Rat) protein is Kidney androgen-regulated protein (Kap).